Here is a 337-residue protein sequence, read N- to C-terminus: Anthranilate phosphoribosyltransferase (337 aa).

5-phospho-alpha-D-ribose 1-diphosphate-binding positions include Gly81, 84–85 (GD), Ser89, 91–94 (NVST), 109–117 (KHGNRAASS), and Ala121. Residue Gly81 participates in anthranilate binding. Ser93 is a binding site for Mg(2+). Asn112 is a binding site for anthranilate. Arg167 is a binding site for anthranilate. Asp226 and Glu227 together coordinate Mg(2+).

This sequence belongs to the anthranilate phosphoribosyltransferase family. In terms of assembly, homodimer. Mg(2+) is required as a cofactor.

It catalyses the reaction N-(5-phospho-beta-D-ribosyl)anthranilate + diphosphate = 5-phospho-alpha-D-ribose 1-diphosphate + anthranilate. It functions in the pathway amino-acid biosynthesis; L-tryptophan biosynthesis; L-tryptophan from chorismate: step 2/5. Its function is as follows. Catalyzes the transfer of the phosphoribosyl group of 5-phosphorylribose-1-pyrophosphate (PRPP) to anthranilate to yield N-(5'-phosphoribosyl)-anthranilate (PRA). The protein is Anthranilate phosphoribosyltransferase of Methylobacterium nodulans (strain LMG 21967 / CNCM I-2342 / ORS 2060).